Reading from the N-terminus, the 288-residue chain is Phosphatidylserine decarboxylase proenzyme (288 aa).

Catalysis depends on charge relay system; for autoendoproteolytic cleavage activity residues D89, H146, and S252. Catalysis depends on S252, which acts as the Schiff-base intermediate with substrate; via pyruvic acid; for decarboxylase activity. The residue at position 252 (S252) is a Pyruvic acid (Ser); by autocatalysis.

The protein belongs to the phosphatidylserine decarboxylase family. PSD-B subfamily. Prokaryotic type I sub-subfamily. As to quaternary structure, heterodimer of a large membrane-associated beta subunit and a small pyruvoyl-containing alpha subunit. Pyruvate is required as a cofactor. Post-translationally, is synthesized initially as an inactive proenzyme. Formation of the active enzyme involves a self-maturation process in which the active site pyruvoyl group is generated from an internal serine residue via an autocatalytic post-translational modification. Two non-identical subunits are generated from the proenzyme in this reaction, and the pyruvate is formed at the N-terminus of the alpha chain, which is derived from the carboxyl end of the proenzyme. The autoendoproteolytic cleavage occurs by a canonical serine protease mechanism, in which the side chain hydroxyl group of the serine supplies its oxygen atom to form the C-terminus of the beta chain, while the remainder of the serine residue undergoes an oxidative deamination to produce ammonia and the pyruvoyl prosthetic group on the alpha chain. During this reaction, the Ser that is part of the protease active site of the proenzyme becomes the pyruvoyl prosthetic group, which constitutes an essential element of the active site of the mature decarboxylase.

It is found in the cell membrane. The enzyme catalyses a 1,2-diacyl-sn-glycero-3-phospho-L-serine + H(+) = a 1,2-diacyl-sn-glycero-3-phosphoethanolamine + CO2. It functions in the pathway phospholipid metabolism; phosphatidylethanolamine biosynthesis; phosphatidylethanolamine from CDP-diacylglycerol: step 2/2. Its function is as follows. Catalyzes the formation of phosphatidylethanolamine (PtdEtn) from phosphatidylserine (PtdSer). This is Phosphatidylserine decarboxylase proenzyme from Shewanella frigidimarina (strain NCIMB 400).